The primary structure comprises 354 residues: Histidinol-phosphate aminotransferase (354 aa).

Residue lysine 208 is modified to N6-(pyridoxal phosphate)lysine.

It belongs to the class-II pyridoxal-phosphate-dependent aminotransferase family. Histidinol-phosphate aminotransferase subfamily. In terms of assembly, homodimer. The cofactor is pyridoxal 5'-phosphate.

The enzyme catalyses L-histidinol phosphate + 2-oxoglutarate = 3-(imidazol-4-yl)-2-oxopropyl phosphate + L-glutamate. It functions in the pathway amino-acid biosynthesis; L-histidine biosynthesis; L-histidine from 5-phospho-alpha-D-ribose 1-diphosphate: step 7/9. In Aquifex aeolicus (strain VF5), this protein is Histidinol-phosphate aminotransferase.